A 691-amino-acid chain; its full sequence is 1-butanol dehydrogenase (cytochrome c) (691 aa).

The signal sequence occupies residues 1 to 38 (MLTTTFARKREESVPLRKGIQRALLGLSCLVLSTTSFA). Glu84 contacts pyrroloquinoline quinone. The cysteines at positions 130 and 131 are disulfide-linked. Pyrroloquinoline quinone-binding positions include Arg136, Thr181, and 197 to 198 (GA). 2 residues coordinate Ca(2+): Glu199 and Asp322. Asp322 serves as the catalytic Proton acceptor. Pyrroloquinoline quinone contacts are provided by residues Lys349, 408 to 409 (NW), and Val558. The 80-residue stretch at 605-684 (DDVAEGTGLY…KIKAFILGTA (80 aa)) folds into the Cytochrome c domain. Heme c-binding residues include Cys618, Cys621, His622, and Met661.

Belongs to the bacterial PQQ dehydrogenase family. In terms of assembly, monomer. It depends on pyrroloquinoline quinone as a cofactor. Requires Ca(2+) as cofactor. Heme c is required as a cofactor.

Its subcellular location is the periplasm. It catalyses the reaction butan-1-ol + 2 Fe(III)-[cytochrome c] = butanal + 2 Fe(II)-[cytochrome c] + 2 H(+). Its activity is regulated as follows. Dehydrogenase activity is increased by ammonium ions. Involved in the metabolism of butane. Could be important in the detoxification of 1-butanol. Catalyzes the oxidation of 1-butanol to butyraldehyde. Also able to use 1-propanol, 2-pentanol, propionaldehyde and butyraldehyde as substrates. The polypeptide is 1-butanol dehydrogenase (cytochrome c) (Thauera butanivorans (strain ATCC 43655 / DSM 2080 / JCM 20651 / CCUG 51053 / NBRC 103042 / IAM 12574 / Bu B1211) (Pseudomonas butanovora)).